The following is a 440-amino-acid chain: C4-dicarboxylate transport protein (440 aa).

8 consecutive transmembrane segments (helical) span residues 8-28 (LYLQVLLAVVLGALVGHLFPA), 40-60 (FIKLVKMLIAPIVFATVVTGI), 74-94 (LKGLLYFEVLTTVALAIGLVV), 147-167 (GDILQVLLFSVLFGAALAALK), 187-207 (IVGFVMRLAPVGAFGAMAFTV), 221-241 (LIACFYATSALFVVLMLGLVL), 288-308 (VVGLVVPMGYSFNLDGTSIYL), and 354-374 (AATLSAVGNIPVAGLALLLGV). The tract at residues 419-440 (DEVEPANDPEPPAMAAGLGLHG) is disordered.

Belongs to the dicarboxylate/amino acid:cation symporter (DAACS) (TC 2.A.23) family.

The protein localises to the cell inner membrane. Functionally, responsible for the transport of dicarboxylates such as succinate, fumarate, and malate from the periplasm across the membrane. The chain is C4-dicarboxylate transport protein from Anaeromyxobacter dehalogenans (strain 2CP-C).